Consider the following 252-residue polypeptide: Small ribosomal subunit protein uS3 (252 aa).

In terms of domain architecture, KH type-2 spans I16–D85. Residues E233–E252 form a disordered region.

The protein belongs to the universal ribosomal protein uS3 family. As to quaternary structure, part of the 30S ribosomal subunit.

Functionally, binds the lower part of the 30S subunit head. This chain is Small ribosomal subunit protein uS3, found in Methanosphaera stadtmanae (strain ATCC 43021 / DSM 3091 / JCM 11832 / MCB-3).